The chain runs to 427 residues: Glutamate-1-semialdehyde 2,1-aminomutase (427 aa).

Lysine 265 bears the N6-(pyridoxal phosphate)lysine mark.

Belongs to the class-III pyridoxal-phosphate-dependent aminotransferase family. HemL subfamily. As to quaternary structure, homodimer. The cofactor is pyridoxal 5'-phosphate.

The protein resides in the cytoplasm. It carries out the reaction (S)-4-amino-5-oxopentanoate = 5-aminolevulinate. It functions in the pathway porphyrin-containing compound metabolism; protoporphyrin-IX biosynthesis; 5-aminolevulinate from L-glutamyl-tRNA(Glu): step 2/2. In Actinobacillus succinogenes (strain ATCC 55618 / DSM 22257 / CCUG 43843 / 130Z), this protein is Glutamate-1-semialdehyde 2,1-aminomutase.